Consider the following 241-residue polypeptide: ATP synthase subunit a (241 aa).

5 helical membrane passes run glycine 30–glycine 50, leucine 89–isoleucine 109, isoleucine 128–serine 148, leucine 193–leucine 213, and glycine 214–glycine 234.

It belongs to the ATPase A chain family. F-type ATPases have 2 components, CF(1) - the catalytic core - and CF(0) - the membrane proton channel. CF(1) has five subunits: alpha(3), beta(3), gamma(1), delta(1), epsilon(1). CF(0) has four main subunits: a, b, b' and c.

Its subcellular location is the cellular thylakoid membrane. Key component of the proton channel; it plays a direct role in the translocation of protons across the membrane. In Synechococcus sp. (strain CC9311), this protein is ATP synthase subunit a.